The following is a 1052-amino-acid chain: Eukaryotic translation initiation factor 3 subunit A (1052 aa).

The stretch at 92–121 (LKKFIELAEKKVTEAQAKADEIQSSLESAA) forms a coiled coil. One can recognise a PCI domain in the interval 339 to 523 (MTKAASFVLL…GVLTFDTDVF (185 aa)). Residues 580–906 (EARLQAKRAA…AEARRAARRT (327 aa)) adopt a coiled-coil conformation. Composition is skewed to basic and acidic residues over residues 617-632 (AATD…EETR) and 794-901 (KEVS…EARR). Disordered regions lie at residues 617–646 (AATD…AEKQ) and 794–1052 (KEVS…QGGQ). Composition is skewed to low complexity over residues 905 to 927 (RTGG…TAPR) and 948 to 964 (KEAA…AAPE). A compositionally biased stretch (polar residues) spans 1013 to 1028 (GSSQPPSRTQTPGSSS).

It belongs to the eIF-3 subunit A family. In terms of assembly, component of the eukaryotic translation initiation factor 3 (eIF-3) complex.

The protein localises to the cytoplasm. RNA-binding component of the eukaryotic translation initiation factor 3 (eIF-3) complex, which is involved in protein synthesis of a specialized repertoire of mRNAs and, together with other initiation factors, stimulates binding of mRNA and methionyl-tRNAi to the 40S ribosome. The eIF-3 complex specifically targets and initiates translation of a subset of mRNAs involved in cell proliferation. The polypeptide is Eukaryotic translation initiation factor 3 subunit A (tif32) (Aspergillus niger (strain ATCC MYA-4892 / CBS 513.88 / FGSC A1513)).